A 617-amino-acid chain; its full sequence is Proline--tRNA ligase (617 aa).

This sequence belongs to the class-II aminoacyl-tRNA synthetase family. ProS type 1 subfamily. In terms of assembly, homodimer.

The protein localises to the cytoplasm. It carries out the reaction tRNA(Pro) + L-proline + ATP = L-prolyl-tRNA(Pro) + AMP + diphosphate. Catalyzes the attachment of proline to tRNA(Pro) in a two-step reaction: proline is first activated by ATP to form Pro-AMP and then transferred to the acceptor end of tRNA(Pro). As ProRS can inadvertently accommodate and process non-cognate amino acids such as alanine and cysteine, to avoid such errors it has two additional distinct editing activities against alanine. One activity is designated as 'pretransfer' editing and involves the tRNA(Pro)-independent hydrolysis of activated Ala-AMP. The other activity is designated 'posttransfer' editing and involves deacylation of mischarged Ala-tRNA(Pro). The misacylated Cys-tRNA(Pro) is not edited by ProRS. The chain is Proline--tRNA ligase from Streptococcus pneumoniae (strain ATCC BAA-255 / R6).